Reading from the N-terminus, the 177-residue chain is Large ribosomal subunit protein uL16m (177 aa).

It belongs to the universal ribosomal protein uL16 family.

The protein localises to the mitochondrion. This is Large ribosomal subunit protein uL16m (RPL16) from Brassica napus (Rape).